The primary structure comprises 62 residues: Protein DsrB (62 aa).

The protein belongs to the DsrB family.

This chain is Protein DsrB, found in Shigella flexneri serotype 5b (strain 8401).